Consider the following 156-residue polypeptide: Large ribosomal subunit protein uL13 (156 aa).

The protein belongs to the universal ribosomal protein uL13 family. As to quaternary structure, part of the 50S ribosomal subunit.

Functionally, this protein is one of the early assembly proteins of the 50S ribosomal subunit, although it is not seen to bind rRNA by itself. It is important during the early stages of 50S assembly. This Archaeoglobus fulgidus (strain ATCC 49558 / DSM 4304 / JCM 9628 / NBRC 100126 / VC-16) protein is Large ribosomal subunit protein uL13.